The chain runs to 183 residues: Adenine phosphoribosyltransferase (183 aa).

The protein belongs to the purine/pyrimidine phosphoribosyltransferase family. As to quaternary structure, homodimer.

It is found in the cytoplasm. It carries out the reaction AMP + diphosphate = 5-phospho-alpha-D-ribose 1-diphosphate + adenine. The protein operates within purine metabolism; AMP biosynthesis via salvage pathway; AMP from adenine: step 1/1. In terms of biological role, catalyzes a salvage reaction resulting in the formation of AMP, that is energically less costly than de novo synthesis. The sequence is that of Adenine phosphoribosyltransferase from Klebsiella pneumoniae (strain 342).